A 225-amino-acid polypeptide reads, in one-letter code: ATP synthase subunit a (225 aa).

5 consecutive transmembrane segments (helical) span residues L16–L36, L79–F99, S105–I125, L176–L196, and V202–I222.

This sequence belongs to the ATPase A chain family. F-type ATPases have 2 components, CF(1) - the catalytic core - and CF(0) - the membrane proton channel. CF(1) has five subunits: alpha(3), beta(3), gamma(1), delta(1), epsilon(1). CF(0) has three main subunits: a(1), b(2) and c(9-12). The alpha and beta chains form an alternating ring which encloses part of the gamma chain. CF(1) is attached to CF(0) by a central stalk formed by the gamma and epsilon chains, while a peripheral stalk is formed by the delta and b chains.

Its subcellular location is the cell inner membrane. Functionally, key component of the proton channel; it plays a direct role in the translocation of protons across the membrane. The sequence is that of ATP synthase subunit a from Campylobacter curvus (strain 525.92).